We begin with the raw amino-acid sequence, 633 residues long: Threonine--tRNA ligase (633 aa).

The region spanning 1–59 (MIRITFSAEQKVKEYSGKVTGFDILQPDVLKEAIAFKVNGELHDLSREIEADAEIEVIQ) is the TGS domain. The interval 240-532 (DHRKIAKDMD…LIENYAGKFP (293 aa)) is catalytic. The Zn(2+) site is built by C332, H383, and H509.

Belongs to the class-II aminoacyl-tRNA synthetase family. Homodimer. Zn(2+) serves as cofactor.

It localises to the cytoplasm. It carries out the reaction tRNA(Thr) + L-threonine + ATP = L-threonyl-tRNA(Thr) + AMP + diphosphate + H(+). In terms of biological role, catalyzes the attachment of threonine to tRNA(Thr) in a two-step reaction: L-threonine is first activated by ATP to form Thr-AMP and then transferred to the acceptor end of tRNA(Thr). Also edits incorrectly charged L-seryl-tRNA(Thr). The protein is Threonine--tRNA ligase of Wolbachia sp. subsp. Drosophila simulans (strain wRi).